Here is a 141-residue protein sequence, read N- to C-terminus: HTH-type transcriptional repressor NsrR (141 aa).

The 128-residue stretch at 2-129 (QLTSFTDYGL…DNYTLADLVE (128 aa)) folds into the HTH rrf2-type domain. The segment at residues 28 to 51 (ISEVTDVYGVSRNHMVKIINQLSR) is a DNA-binding region (H-T-H motif). Residues Cys-91, Cys-96, and Cys-102 each contribute to the [2Fe-2S] cluster site.

[2Fe-2S] cluster is required as a cofactor.

Nitric oxide-sensitive repressor of genes involved in protecting the cell against nitrosative stress. May require iron for activity. In Escherichia coli O157:H7 (strain EC4115 / EHEC), this protein is HTH-type transcriptional repressor NsrR.